Consider the following 140-residue polypeptide: Phospholipase A2 (140 aa).

The signal sequence occupies residues 1–21; it reads MNPAHLLVLAAVCISLSGASS. Positions 22–27 are excised as a propeptide; sequence IAPQPL. 7 disulfide bridges follow: cysteine 38-cysteine 97, cysteine 52-cysteine 139, cysteine 54-cysteine 70, cysteine 69-cysteine 125, cysteine 76-cysteine 118, cysteine 86-cysteine 111, and cysteine 104-cysteine 116. Asparagine 39 carries N-linked (GlcNAc...) asparagine glycosylation. The Ca(2+) site is built by tyrosine 53, glycine 55, and glycine 57. Histidine 73 is an active-site residue. Aspartate 74 is a binding site for Ca(2+). A glycan (N-linked (GlcNAc...) asparagine) is linked at asparagine 107. Residue aspartate 119 is part of the active site.

This sequence belongs to the phospholipase A2 family. Group I subfamily. D49 sub-subfamily. The cofactor is Ca(2+). Expressed by the venom gland.

It localises to the secreted. It catalyses the reaction a 1,2-diacyl-sn-glycero-3-phosphocholine + H2O = a 1-acyl-sn-glycero-3-phosphocholine + a fatty acid + H(+). Its function is as follows. PLA2 catalyzes the calcium-dependent hydrolysis of the 2-acyl groups in 3-sn-phosphoglycerides. This is Phospholipase A2 from Micrurus altirostris (Uruguayan coral snake).